The sequence spans 744 residues: Phosphoribosylformylglycinamidine synthase subunit PurL (744 aa).

His49 is a catalytic residue. Tyr52 and Lys91 together coordinate ATP. Glu93 lines the Mg(2+) pocket. Substrate-binding positions include Ser94–His97 and Arg116. Catalysis depends on His95, which acts as the Proton acceptor. Asp117 lines the Mg(2+) pocket. Gln240 lines the substrate pocket. Asp268 is a Mg(2+) binding site. Residue Glu312 to Gln314 coordinates substrate. The ATP site is built by Asp493 and Gly530. Residue Asn531 participates in Mg(2+) binding. Ser533 serves as a coordination point for substrate.

It belongs to the FGAMS family. As to quaternary structure, monomer. Part of the FGAM synthase complex composed of 1 PurL, 1 PurQ and 2 PurS subunits.

It localises to the cytoplasm. The enzyme catalyses N(2)-formyl-N(1)-(5-phospho-beta-D-ribosyl)glycinamide + L-glutamine + ATP + H2O = 2-formamido-N(1)-(5-O-phospho-beta-D-ribosyl)acetamidine + L-glutamate + ADP + phosphate + H(+). It functions in the pathway purine metabolism; IMP biosynthesis via de novo pathway; 5-amino-1-(5-phospho-D-ribosyl)imidazole from N(2)-formyl-N(1)-(5-phospho-D-ribosyl)glycinamide: step 1/2. Its function is as follows. Part of the phosphoribosylformylglycinamidine synthase complex involved in the purines biosynthetic pathway. Catalyzes the ATP-dependent conversion of formylglycinamide ribonucleotide (FGAR) and glutamine to yield formylglycinamidine ribonucleotide (FGAM) and glutamate. The FGAM synthase complex is composed of three subunits. PurQ produces an ammonia molecule by converting glutamine to glutamate. PurL transfers the ammonia molecule to FGAR to form FGAM in an ATP-dependent manner. PurS interacts with PurQ and PurL and is thought to assist in the transfer of the ammonia molecule from PurQ to PurL. The polypeptide is Phosphoribosylformylglycinamidine synthase subunit PurL (Nitrobacter hamburgensis (strain DSM 10229 / NCIMB 13809 / X14)).